Reading from the N-terminus, the 272-residue chain is Replication-associated protein A (272 aa).

The region spanning 11-114 is the CRESS-DNA virus Rep endonuclease domain; sequence SHRNVNTFLT…PLAVFERGTF (104 aa). Residues 18-21 carry the RCR-1 motif; sequence FLTY. A divalent metal cation-binding residues include glutamate 52, histidine 60, and histidine 62. The RCR-2 signature appears at 60 to 62; it reads HLH. The active-site For DNA cleavage activity is the tyrosine 100. The short motif at 100 to 103 is the RCR-3 element; it reads YILK. A divalent metal cation is bound at residue glutamate 104. Over residues 119-128 the composition is skewed to polar residues; it reads SSFQGNPSKG. The segment at 119–138 is disordered; that stretch reads SSFQGNPSKGNSEKKPSKDE. The span at 129 to 138 shows a compositional bias: basic and acidic residues; sequence NSEKKPSKDE. The oligomerization stretch occupies residues 175–187; that stretch reads SANKLFPEIQEEF. Positions 198–202 match the LXCXE motif, interaction with host RBR1 motif; it reads LLCNE. The transactivation stretch occupies residues 221–230; sequence MLLQPTCYTL. A compositionally biased stretch (polar residues) spans 245 to 264; that stretch reads SQQMKEQESRASTSSVQQEL. The tract at residues 245-272 is disordered; it reads SQQMKEQESRASTSSVQQELGNLLGPEA.

It belongs to the geminiviridae Rep protein family. As to quaternary structure, homooligomer. Interacts (via LXCXE domain) with host retinoblastoma-related protein 1 (RBR1), and may thereby deregulate the host cell cycle. Part of the C- and V-complexes which are RepA-Rep-DNA complexes involved in the c-sense and v-sense transcription. It depends on Mg(2+) as a cofactor. The cofactor is Mn(2+).

The protein localises to the host nucleus. Its subcellular location is the host cytoplasm. In terms of biological role, implicated in enhancement of V-sense gene expression. Acts a an inhibitor of C-sense gene transcription. This is Replication-associated protein A from Avena sativa (Oat).